Reading from the N-terminus, the 473-residue chain is Photosystem II CP43 reaction center protein (473 aa).

A propeptide spanning residues 1–14 is cleaved from the precursor; that stretch reads MKTLYSLRRFYPVE. Thr-15 bears the N-acetylthreonine mark. Thr-15 carries the phosphothreonine modification. 5 helical membrane-spanning segments follow: residues 69 to 93, 134 to 155, 178 to 200, 255 to 275, and 291 to 312; these read LFEV…PHLA, LLGP…KDRN, KALY…RKIT, KPFA…LSYS, and WFNN…ASQA. Glu-367 lines the [CaMn4O5] cluster pocket. A helical membrane pass occupies residues 447–471; sequence RARAAAAGFEKGIDRDFEPVLSMTP.

It belongs to the PsbB/PsbC family. PsbC subfamily. PSII is composed of 1 copy each of membrane proteins PsbA, PsbB, PsbC, PsbD, PsbE, PsbF, PsbH, PsbI, PsbJ, PsbK, PsbL, PsbM, PsbT, PsbX, PsbY, PsbZ, Psb30/Ycf12, at least 3 peripheral proteins of the oxygen-evolving complex and a large number of cofactors. It forms dimeric complexes. Requires Binds multiple chlorophylls and provides some of the ligands for the Ca-4Mn-5O cluster of the oxygen-evolving complex. It may also provide a ligand for a Cl- that is required for oxygen evolution. PSII binds additional chlorophylls, carotenoids and specific lipids. as cofactor.

The protein localises to the plastid. It localises to the chloroplast thylakoid membrane. In terms of biological role, one of the components of the core complex of photosystem II (PSII). It binds chlorophyll and helps catalyze the primary light-induced photochemical processes of PSII. PSII is a light-driven water:plastoquinone oxidoreductase, using light energy to abstract electrons from H(2)O, generating O(2) and a proton gradient subsequently used for ATP formation. This chain is Photosystem II CP43 reaction center protein, found in Panax ginseng (Korean ginseng).